A 205-amino-acid chain; its full sequence is Syndecan 4-B (205 aa).

Positions 1–17 (MNRLLLLLALVLSGVAA) are cleaved as a signal peptide. Residues 18-162 (ESIRETETMD…FFQRTEVIVA (145 aa)) lie on the Extracellular side of the membrane. The disordered stretch occupies residues 26-113 (MDPTSMLEYE…HDFDETKTGR (88 aa)). O-linked (Xyl...) (glycosaminoglycan) serine glycans are attached at residues serine 37, serine 73, and serine 75. Positions 44 to 94 (VFVDEDDDDDYEDGVDYEIDSESDNDEDYSGSGDDDFDDEDNVEDEDEEET) are enriched in acidic residues. The segment covering 102–113 (PEHDFDETKTGR) has biased composition (basic and acidic residues). The helical transmembrane segment at 163–183 (IIAGTLVGLVVAVSFIVFLVI) threads the bilayer. Topologically, residues 184-205 (RRNQNGDLVKKPIYKKTSTMEV) are cytoplasmic.

It belongs to the syndecan proteoglycan family. Interacts with the Wnt receptor fzd7 and its signal transducer dvl2/dsh. O-glycosylated; contains both chondroitin sulfate and heparan sulfate. Ser-37, Ser-73 and Ser-75 can all be modified by either chondroitin sulfate or heparan sulfate, and the protein exists in forms that contain only chondroitin sulfate, only heparan sulfate and both chondroitin sulfate and heparan sulfate. As to expression, expressed in the animal hemisphere from the 4-cell to the blastula stage. During gastrulation, expressed in the involuting dorsal mesoderm and ectoderm. After involution, localized mainly to the anterior neuroectoderm. At later stages, expressed in the brain, branchial arches, pronephros, tailbud, and at low levels in the somites.

The protein resides in the membrane. In terms of biological role, cell surface proteoglycan. Regulates non-canonical Wnt signaling, being necessary and sufficient for fibronectrin-mediated translocation of dvl2/dsh to the plasma membrane. Required for proper convergent extension movements during gastrulation, which shape the neural plate, and for subsequent neural tube closure. This Xenopus laevis (African clawed frog) protein is Syndecan 4-B (sdc4-b).